A 149-amino-acid polypeptide reads, in one-letter code: Ribosome maturation factor RimP (149 aa).

It belongs to the RimP family.

The protein localises to the cytoplasm. Functionally, required for maturation of 30S ribosomal subunits. The protein is Ribosome maturation factor RimP of Neisseria gonorrhoeae (strain NCCP11945).